Here is a 539-residue protein sequence, read N- to C-terminus: MDSQRTLLVLLLALVSFLLFQQWQVAKNPAPQAVEQAQTSSTLPAPSFADELDPAPAQQASAKLITVTTDVLTLSIDTVGGDVVAADLNQYSAELNSANAFELLRDTQGHQFIAQSGLVGPQGIDLSSNNRPSYQVSADSFTLADDQNELRIPMTYQANGLEYTKTFILKRGSYAIDVEFDVINKSGNNATLGMYAHLRQNLMDAGGSITMPTYRGGAYSTEDTRYKKYSFEDMQDRNLSLTLTNGQGWAAMIQHYFAAAWIPRNEPGANLYTRVIGNMGDIGVRMPNKTVADGDSAHFTATLWAGPKLQDQMAEVAPNLDLVVDYGWLWFIAKPLHWLLSVIQSFVGNWGVAIICLTFIVRGAMYPLTKAQYTSMAKMRMLQPKLQAMRERIGDDRQRMSQEMMELYKKEKVNPLGGCLPLILQMPIFIALYWALMESVELRHSPFILWIHDLSAQDPYFILPLLMGGSMFLIQKMSPTTVTDPMQQKIMTFMPVMFTFFFLWFPSGLVLYWLVSNIVTLIQQSLIYKALEKKGLHTK.

5 helical membrane-spanning segments follow: residues 6-26 (TLLV…WQVA), 341-361 (SVIQ…TFIV), 416-436 (LGGC…YWAL), 454-474 (LSAQ…MFLI), and 495-515 (PVMF…YWLV).

This sequence belongs to the OXA1/ALB3/YidC family. Type 1 subfamily. Interacts with the Sec translocase complex via SecD. Specifically interacts with transmembrane segments of nascent integral membrane proteins during membrane integration.

It localises to the cell inner membrane. Its function is as follows. Required for the insertion and/or proper folding and/or complex formation of integral membrane proteins into the membrane. Involved in integration of membrane proteins that insert both dependently and independently of the Sec translocase complex, as well as at least some lipoproteins. Aids folding of multispanning membrane proteins. The chain is Membrane protein insertase YidC from Vibrio vulnificus (strain YJ016).